The primary structure comprises 492 residues: 2-succinylbenzoate--CoA ligase (492 aa).

This sequence belongs to the ATP-dependent AMP-binding enzyme family. MenE subfamily.

The enzyme catalyses 2-succinylbenzoate + ATP + CoA = 2-succinylbenzoyl-CoA + AMP + diphosphate. Its pathway is quinol/quinone metabolism; 1,4-dihydroxy-2-naphthoate biosynthesis; 1,4-dihydroxy-2-naphthoate from chorismate: step 5/7. The protein operates within quinol/quinone metabolism; menaquinone biosynthesis. Its function is as follows. Converts 2-succinylbenzoate (OSB) to 2-succinylbenzoyl-CoA (OSB-CoA). The protein is 2-succinylbenzoate--CoA ligase of Staphylococcus aureus (strain MSSA476).